The chain runs to 319 residues: Olfactory receptor 2S2 (319 aa).

At 1–26 the chain is on the extracellular side; sequence MEKANETSPVMGFVLLRLSAHPELEK. N5 carries an N-linked (GlcNAc...) asparagine glycan. A helical transmembrane segment spans residues 27–50; sequence TFFVLILLMYLVILLGNGVLILVT. Residues 51–58 lie on the Cytoplasmic side of the membrane; it reads ILDSRLHT. A helical transmembrane segment spans residues 59–80; the sequence is PMYFFLGNLSFLDICFTTSSVP. Residues 81–101 lie on the Extracellular side of the membrane; sequence LVLDSFLTPQETISFSACAVQ. C98 and C190 form a disulfide bridge. A helical membrane pass occupies residues 102–121; sequence MALSFAMAGTECLLLSMMAF. The Cytoplasmic segment spans residues 122-140; that stretch reads DRYVAICNPLRYSVIMSKA. The chain crosses the membrane as a helical span at residues 141–159; the sequence is AYMPMAASSWAIGGAASVV. The Extracellular portion of the chain corresponds to 160–196; it reads HTSLAIQLPFCGDNVINHFTCEILAVLKLACADISIN. The chain crosses the membrane as a helical span at residues 197 to 220; the sequence is VISMEVTNVIFLGVPVLFISFSYV. Residues 221-237 are Cytoplasmic-facing; it reads FIITTILRIPSAEGRKK. Residues 238–260 form a helical membrane-spanning segment; that stretch reads VFSTCSAHLTVVIVFYGTLFFMY. Topologically, residues 261–279 are extracellular; that stretch reads GKPKSKDSMGADKEDLSDK. Residues 280 to 299 traverse the membrane as a helical segment; that stretch reads LIPLFYGVVTPMLNPIIYSL. Over 300–319 the chain is Cytoplasmic; that stretch reads RNKDVKAAVRRLLRPKGFTQ.

It belongs to the G-protein coupled receptor 1 family.

The protein resides in the cell membrane. Odorant receptor. This chain is Olfactory receptor 2S2 (OR2S2), found in Homo sapiens (Human).